A 618-amino-acid polypeptide reads, in one-letter code: MSAILSADDLNDFISPGVACIKPVETLPAKSERDESAYEVTTEDKVAAENPSPAQISLTDCLACSGCVTSAEAVLISLQSHAEVLNTLDAYPELRVDGFRNGVQNGATGDARIFVASVSPQVRASMAATYGVSEKEAGYMIEQFLSGPQGLRAGGQHGSGFTWVVDTNVIRDVVLELTTDEVTASRAKFDSTATSESAEFPIPRQPILSSACPGWICYAEKTHPHVLPHLSRLKSPQALTGTFIKTILSKRLNVPPSRIWHLAIMPCFDKKLEASRQELTDASWQTTNHDIFASPAMDQPIRDVDCVITSRELLMLASSRNISLLTLPLTPLPSSFTTPFPDPRIAQFLFPKHHASNQSVSSGPSGGYLHHLLTTHQALHPNSTIQAQRGRNADVIDYTLVSAETGRPIIKAARYYGFRNIQNLVRKLKPAKTSRLPGARAAVSRRTGISASHTAAGGGVSDYAYIEVMACPGGCTNGGGQIRVEDARDTATIATSSIDGSAPTAQTSQHKPTPQEQRAWLARVDEVYYSADSDSHPPSSPSTSLGDEMEIDRPLEPESRSQSVHAILQYWSDMTGIPLPKLVYTTFRKVESDVGKSKNGAADTARVAELAGKIGGGW.

Residues Cys-20, Cys-61, Cys-64, Cys-67, Cys-212, Cys-267, Cys-471, and Cys-475 each contribute to the [4Fe-4S] cluster site. Disordered stretches follow at residues 495 to 516 and 530 to 560; these read TSSI…TPQE and SADS…PESR.

This sequence belongs to the NARF family.

In terms of biological role, component of the cytosolic Fe/S protein assembly machinery. Required for maturation of extramitochondrial Fe/S proteins. May play a role in the transfer of pre-assembled Fe/S clusters to target apoproteins. This is Cytosolic Fe-S cluster assembly factor NAR1 (NAR1) from Coccidioides immitis (strain RS) (Valley fever fungus).